The following is a 101-amino-acid chain: Small ubiquitin-related modifier 1 (101 aa).

The residue at position 2 (S2) is an N-acetylserine. S2 carries the phosphoserine modification. A Glycyl lysine isopeptide (Lys-Gly) (interchain with G-Cter in SUMO1); alternate cross-link involves residue K7. A Glycyl lysine isopeptide (Lys-Gly) (interchain with G-Cter in SUMO2); alternate cross-link involves residue K7. A Phosphoserine modification is found at S9. Glycyl lysine isopeptide (Lys-Gly) (interchain with G-Cter in SUMO2) cross-links involve residues K16, K17, and K23. A (Microbial infection) Interaction with Tula hantavirus region spans residues 16-25 (KKEGEYIKLK). One can recognise a Ubiquitin-like domain in the interval 20–97 (EYIKLKVIGQ…IEVYQEQTGG (78 aa)). K25 is covalently cross-linked (Glycyl lysine isopeptide (Lys-Gly) (interchain with G-Cter in SUMO1)). S32 bears the Phosphoserine mark. Residues K37, K39, K45, and K46 each participate in a glycyl lysine isopeptide (Lys-Gly) (interchain with G-Cter in SUMO2) cross-link. The interval 37 to 40 (KVKM) is (Microbial infection) Interaction with Tula hantavirus. G97 is covalently cross-linked (Glycyl lysine isopeptide (Gly-Lys) (interchain with K-? in acceptor proteins)). The propeptide occupies 98-101 (HSTV).

It belongs to the ubiquitin family. SUMO subfamily. Covalently attached to KCNB1; UBE2I increases cross-linking with KCNB1 and PIAS1 decreases cross-links with KCNB1. Interacts with SAE2, RANBP2, PIAS1 and PIAS2. Interacts with PRKN. Covalently attached to a number of proteins such as IKFZ1, PML, RANGAP1, HIPK2, SP100, p53, p73-alpha, MDM2, JUN, DNMT3B and TDG. Also interacts with HIF1A, HIPK2, HIPK3, CHD3, EXOSC9, RAD51 and RAD52. Interacts with USP25 (via ts SIM domain); the interaction weakly sumoylates USP25. Interacts with SIMC1, CASP8AP2, RNF111 and SOBP (via SIM domains). Interacts with BHLHE40/DEC1. Interacts with RWDD3. Interacts with UBE2I/UBC9 and this interaction is enhanced in the presence of RWDD3. Interacts with MTA1. Interacts with SENP2. Interacts with HINT1. In terms of assembly, (Microbial infection) Interacts with Epstein-barr virus BGLF4. As to quaternary structure, (Microbial infection) Interacts (via N-terminus) with Tula hantavirus nucleoprotein. (Microbial infection) Interacts (via N-terminus) with Hantaan hantavirus nucleoprotein. In terms of processing, cleavage of precursor form by SENP1 or SENP2 is necessary for function. Post-translationally, polymeric SUMO1 chains undergo polyubiquitination by RNF4.

The protein localises to the nucleus membrane. Its subcellular location is the nucleus speckle. The protein resides in the cytoplasm. It localises to the nucleus. It is found in the PML body. The protein localises to the cell membrane. Ubiquitin-like protein that can be covalently attached to proteins as a monomer or a lysine-linked polymer. Covalent attachment via an isopeptide bond to its substrates requires prior activation by the E1 complex SAE1-SAE2 and linkage to the E2 enzyme UBE2I, and can be promoted by E3 ligases such as PIAS1-4, RANBP2 or CBX4. This post-translational modification on lysine residues of proteins plays a crucial role in a number of cellular processes such as nuclear transport, DNA replication and repair, mitosis and signal transduction. Involved for instance in targeting RANGAP1 to the nuclear pore complex protein RANBP2. Covalently attached to the voltage-gated potassium channel KCNB1; this modulates the gating characteristics of KCNB1. Polymeric SUMO1 chains are also susceptible to polyubiquitination which functions as a signal for proteasomal degradation of modified proteins. May also regulate a network of genes involved in palate development. Covalently attached to ZFHX3. This is Small ubiquitin-related modifier 1 (SUMO1) from Homo sapiens (Human).